The primary structure comprises 476 residues: Lactate utilization protein B (476 aa).

4Fe-4S ferredoxin-type domains lie at 304 to 334 and 353 to 382; these read GGEF…GHTY and YDDF…LHQL. C313, C316, C319, C323, C366, C369, and C373 together coordinate [4Fe-4S] cluster. The segment at 452-476 is disordered; the sequence is RDFPAPNKNSFRNWMKHRTKGDEES.

Belongs to the LutB/YkgF family.

Is involved in L-lactate degradation and allows cells to grow with lactate as the sole carbon source. Has probably a role as an electron transporter during oxidation of L-lactate. In Lysinibacillus sphaericus (strain C3-41), this protein is Lactate utilization protein B.